A 607-amino-acid polypeptide reads, in one-letter code: Probable Ufm1-specific protease 2 (607 aa).

Active-site residues include Cys-440, Asp-564, and His-566.

Belongs to the peptidase C78 family.

Its function is as follows. Thiol protease which recognizes and hydrolyzes the peptide bond at the C-terminal Gly of UFM1, a ubiquitin-like modifier protein bound to a number of target proteins. Does not hydrolyze SUMO1 or ISG15 ubiquitin-like proteins. This chain is Probable Ufm1-specific protease 2, found in Drosophila melanogaster (Fruit fly).